The chain runs to 262 residues: MKDLDFSKKPLIGVVHLKPLPGSPRYGGDFEEVIEWAIRDAKTYEEAGFDGIIVENFGDSPFSKTLPREVIPAFTVVAKAVKKEVSLPLGINALRNDCIVAYSIAHAVGGSFIRVNVLTGVAFTDQGIIEGCARELWNVKRIIGGDILTLADVHVKHAVHFTNFEDAVKDTVERGLADGIIVTGRRTGESISLEDLILAKRVSSIPVLVGSGVNPRNFRTLFKYADGFIVGTWVKENGKINNPVSLERAKILVRMKNSLMGV.

This sequence belongs to the BtpA family.

This is an uncharacterized protein from Pyrococcus furiosus (strain ATCC 43587 / DSM 3638 / JCM 8422 / Vc1).